The sequence spans 177 residues: RNA pyrophosphohydrolase (177 aa).

Residues 6–149 (GYRPNVGIVI…KRDVYRRVMK (144 aa)) form the Nudix hydrolase domain. Positions 38–59 (GGINPGESAEQAMYRELFEEVG) match the Nudix box motif.

This sequence belongs to the Nudix hydrolase family. RppH subfamily. A divalent metal cation is required as a cofactor.

Accelerates the degradation of transcripts by removing pyrophosphate from the 5'-end of triphosphorylated RNA, leading to a more labile monophosphorylated state that can stimulate subsequent ribonuclease cleavage. This chain is RNA pyrophosphohydrolase, found in Cronobacter sakazakii (strain ATCC BAA-894) (Enterobacter sakazakii).